A 283-amino-acid polypeptide reads, in one-letter code: Peroxisomal protein 2 (283 aa).

Positions 281–283 (VKL) match the Peroxisomal target signal 1 (PTS1) motif.

It belongs to the PXP2 family.

It is found in the peroxisome matrix. It localises to the cytoplasm. The protein localises to the cytosol. Its function is as follows. Probably involved in peroxisome formation or maintenance as well as in amino acid metabolism. The protein is Peroxisomal protein 2 of Saccharomyces cerevisiae (strain ATCC 204508 / S288c) (Baker's yeast).